Consider the following 359-residue polypeptide: Ribosomal RNA small subunit methyltransferase H (359 aa).

S-adenosyl-L-methionine is bound by residues 39-41 (AGH), D58, F87, D108, and Q115. The segment at 339-359 (IQGSASPGRAKNTARIRTRRG) is disordered. Residues 350–359 (NTARIRTRRG) show a composition bias toward basic residues.

The protein belongs to the methyltransferase superfamily. RsmH family.

It is found in the cytoplasm. It catalyses the reaction cytidine(1402) in 16S rRNA + S-adenosyl-L-methionine = N(4)-methylcytidine(1402) in 16S rRNA + S-adenosyl-L-homocysteine + H(+). Functionally, specifically methylates the N4 position of cytidine in position 1402 (C1402) of 16S rRNA. The sequence is that of Ribosomal RNA small subunit methyltransferase H from Bifidobacterium longum subsp. infantis (strain ATCC 15697 / DSM 20088 / JCM 1222 / NCTC 11817 / S12).